A 163-amino-acid polypeptide reads, in one-letter code: Transcription antitermination protein NusB (163 aa).

This sequence belongs to the NusB family.

Functionally, involved in transcription antitermination. Required for transcription of ribosomal RNA (rRNA) genes. Binds specifically to the boxA antiterminator sequence of the ribosomal RNA (rrn) operons. This is Transcription antitermination protein NusB from Granulibacter bethesdensis (strain ATCC BAA-1260 / CGDNIH1).